Consider the following 227-residue polypeptide: MTAIAPVITIDGPSGAGKGTLCKAMAEALQWHLLDSGAIYRVLALAALHHHVDVASEDALVPLASHLDVRFVSTNGNLEVILEGEDVSGEIRTQEVANAASQVAAFPRVREALLRRQRAFRELPGLIADGRDMGTVVFPDAPVKIFLDASSEERAHRRMLQLQEKGFSVNFERLLAEIKERDDRDRNRAVAPLVPAADALVLDSTTLSIEQVIEKALQYARQKLALA.

12–20 (GPSGAGKGT) is a binding site for ATP.

Belongs to the cytidylate kinase family. Type 1 subfamily.

It localises to the cytoplasm. It catalyses the reaction CMP + ATP = CDP + ADP. The enzyme catalyses dCMP + ATP = dCDP + ADP. This Shigella boydii serotype 18 (strain CDC 3083-94 / BS512) protein is Cytidylate kinase.